The following is a 617-amino-acid chain: Secretogranin-2 (617 aa).

Positions 1–27 (MAEAKTHWLGAALSLIPLIFLISGAEA) are cleaved as a signal peptide. Positions 28-30 (ASF) are excised as a propeptide. Residues 120–143 (QAENEPQSAPKENKPYALNSEKNF) form a disordered region. Residue Y151 is modified to Sulfotyrosine. S174 is modified (phosphoserine). The tract at residues 182 to 200 (TNEIVEEQYTPQSLATLES) is O-glycosylated at one site. 2 stretches are compositionally biased toward basic and acidic residues: residues 257–284 (IESQ…EMKR) and 293–302 (EDLRKESKDQ). The tract at residues 257 to 302 (IESQTQEEVRDSKENIEKNEQINDEMKRSGQLGIQEEDLRKESKDQ) is disordered. S268 carries the post-translational modification Phosphoserine. A phosphoserine mark is found at S432, S532, S555, and S556. Residues 552–583 (NQGSSQETDKLAPVSKRFPVGPPKNDDTPNRQ) are disordered.

Belongs to the chromogranin/secretogranin protein family. In terms of assembly, interacts with Secretogranin III/SCG3. In terms of processing, O-glycosylated.

The protein localises to the secreted. Its function is as follows. Neuroendocrine protein of the granin family that regulates the biogenesis of secretory granules. This chain is Secretogranin-2 (SCG2), found in Homo sapiens (Human).